The primary structure comprises 346 residues: MKQIINPLKGNNNKVPIWFMRQAGRYLPEYKKVRETTKNFLDFCYDVSKATEVTLQPIKRYGFDAAIIFSDILVLPHALGWEVDFKENIGPILKQFKSQEDFKYLQINPNYKLEKVYEIIKKVKKELPSPISLIGFAGSPWTVMSYMLEGKGKQDFKTSKKFIYENKILAEELLNFITEKTADHLINQAKSGADVLKLFDSWSGVLAEEEFTEFVIEPTKKIILKVKEVFPKTPIIAFPKGAGLLYEKFIKEVPIDVLAVDQMVPLEKMKEWSDKVIVQGNLDPVVLLTNKEIIKEKTYKILQVMKGKNFIFNLGHGILPETPTENVEFLTEYVRLYEEKNSNSTF.

Residues 21–25, F40, D71, Y146, S201, and H316 contribute to the substrate site; that span reads RQAGR.

This sequence belongs to the uroporphyrinogen decarboxylase family. Homodimer.

The protein resides in the cytoplasm. It catalyses the reaction uroporphyrinogen III + 4 H(+) = coproporphyrinogen III + 4 CO2. The protein operates within porphyrin-containing compound metabolism; protoporphyrin-IX biosynthesis; coproporphyrinogen-III from 5-aminolevulinate: step 4/4. Catalyzes the decarboxylation of four acetate groups of uroporphyrinogen-III to yield coproporphyrinogen-III. The protein is Uroporphyrinogen decarboxylase of Rickettsia conorii (strain ATCC VR-613 / Malish 7).